Consider the following 161-residue polypeptide: Transcriptional regulator MraZ (161 aa).

2 consecutive SpoVT-AbrB domains span residues 7 to 69 (KELH…EPDV) and 98 to 141 (LDVV…EPER).

It belongs to the MraZ family. Forms oligomers.

It is found in the cytoplasm. The protein localises to the nucleoid. This chain is Transcriptional regulator MraZ, found in Chlorobium limicola (strain DSM 245 / NBRC 103803 / 6330).